Here is a 345-residue protein sequence, read N- to C-terminus: D-fructose 1,6-bisphosphatase class 2/sedoheptulose 1,7-bisphosphatase (345 aa).

4 residues coordinate Mn(2+): Asp-33, Glu-57, Asp-97, and Glu-100. Residues 100 to 102, Tyr-131, 176 to 178, and 198 to 200 contribute to the substrate site; these read EGT, RDR, and DGD. Glu-225 is a Mn(2+) binding site.

This sequence belongs to the FBPase class 2 family. Homotetramer. Mn(2+) serves as cofactor.

It catalyses the reaction beta-D-fructose 1,6-bisphosphate + H2O = beta-D-fructose 6-phosphate + phosphate. The enzyme catalyses D-sedoheptulose 1,7-bisphosphate + H2O = D-sedoheptulose 7-phosphate + phosphate. Its pathway is carbohydrate biosynthesis; Calvin cycle. Its function is as follows. Catalyzes the hydrolysis of fructose 1,6-bisphosphate (Fru 1,6-P2) and sedoheptulose 1,7-bisphosphate (Sed 1,7-P2) to fructose 6-phosphate and sedoheptulose 7-phosphate, respectively. The polypeptide is D-fructose 1,6-bisphosphatase class 2/sedoheptulose 1,7-bisphosphatase (Nostoc sp. (strain PCC 7120 / SAG 25.82 / UTEX 2576)).